The sequence spans 515 residues: 1-pyrroline-5-carboxylate dehydrogenase (515 aa).

Active-site residues include E286 and C320.

Belongs to the aldehyde dehydrogenase family. RocA subfamily.

The enzyme catalyses L-glutamate 5-semialdehyde + NAD(+) + H2O = L-glutamate + NADH + 2 H(+). The protein operates within amino-acid degradation; L-proline degradation into L-glutamate; L-glutamate from L-proline: step 2/2. This is 1-pyrroline-5-carboxylate dehydrogenase from Bacillus cereus (strain B4264).